Consider the following 882-residue polypeptide: Bifunctional heparan sulfate N-deacetylase/N-sulfotransferase 1 (882 aa).

The Cytoplasmic segment spans residues 1-17; sequence MPALACLRRLCRHVSPQ. The tract at residues 1–169 is sufficient for localization to Golgi membrane; sequence MPALACLRRL…VAYGVGIIGF (169 aa). Residues 18–39 traverse the membrane as a helical; Signal-anchor for type II membrane protein segment; it reads AVLFLLFIFCLFSVFISAYYLY. The heparan sulfate N-deacetylase 1 stretch occupies residues 40 to 598; that stretch reads GWKRGLEPSA…KRHKDIWSKE (559 aa). The Lumenal segment spans residues 40 to 882; the sequence is GWKRGLEPSA…WLREDLQNTR (843 aa). 3 N-linked (GlcNAc...) asparagine glycosylation sites follow: N231, N351, and N401. Residues 599–882 are heparan sulfate N-sulfotransferase 1; the sequence is KTCDRFPKLL…WLREDLQNTR (284 aa). The For sulfotransferase activity role is filled by K614. 614 to 618 contacts adenosine 3',5'-bisphosphate; sequence KTGTT. An N-linked (GlcNAc...) asparagine glycan is attached at N667. Adenosine 3',5'-bisphosphate contacts are provided by S712 and W817. A disulfide bond links C818 and C828. 833–837 is a binding site for adenosine 3',5'-bisphosphate; the sequence is KGRKY.

Belongs to the sulfotransferase 1 family. NDST subfamily. As to quaternary structure, monomer. Interacts with heparan sulfate co-polymerase subunits EXT1 and EXT2. Interacts with NDST1 isoform 3. In terms of assembly, interacts with heparan sulfate co-polymerase subunits EXT1 and EXT2. Interacts with NDST1 isoform 1. As to expression, widely expressed. Expression is most abundant in heart, liver and pancreas.

It is found in the golgi apparatus. The protein localises to the trans-Golgi network membrane. Its subcellular location is the cis-Golgi network membrane. It carries out the reaction N-acetyl-alpha-D-glucosaminyl-[heparan sulfate](n) + H2O = alpha-D-glucosaminyl-[heparan sulfate](n) + acetate. The catalysed reaction is alpha-D-glucosaminyl-[heparan sulfate](n) + 3'-phosphoadenylyl sulfate = N-sulfo-alpha-D-glucosaminyl-[heparan sulfate](n) + adenosine 3',5'-bisphosphate + 2 H(+). The protein operates within glycan metabolism; heparan sulfate biosynthesis. It functions in the pathway glycan metabolism; heparin biosynthesis. Its function is as follows. Essential bifunctional enzyme that catalyzes both the N-deacetylation and the N-sulfation of glucosamine (GlcNAc) of the glycosaminoglycan in heparan sulfate. Modifies the GlcNAc-GlcA disaccharide repeating sugar backbone to make N-sulfated heparosan, a prerequisite substrate for later modifications in heparin biosynthesis. Plays a role in determining the extent and pattern of sulfation of heparan sulfate. Participates in biosynthesis of heparan sulfate that can ultimately serve as L-selectin ligands, thereby playing a role in inflammatory response. Required for the exosomal release of SDCBP, CD63 and syndecan. Lacks both N-deacetylase and N-sulfotransferase activities. Acts as a dominant negative on isoform 1, likely by changing the composition of enzyme complexes responsible for elongation and modification of heparan sulfates. This is Bifunctional heparan sulfate N-deacetylase/N-sulfotransferase 1 from Homo sapiens (Human).